Here is a 237-residue protein sequence, read N- to C-terminus: Ubiquinone biosynthesis O-methyltransferase (237 aa).

4 residues coordinate S-adenosyl-L-methionine: Arg-39, Gly-59, Asp-80, and Met-124.

It belongs to the methyltransferase superfamily. UbiG/COQ3 family.

It catalyses the reaction a 3-demethylubiquinol + S-adenosyl-L-methionine = a ubiquinol + S-adenosyl-L-homocysteine + H(+). It carries out the reaction a 3-(all-trans-polyprenyl)benzene-1,2-diol + S-adenosyl-L-methionine = a 2-methoxy-6-(all-trans-polyprenyl)phenol + S-adenosyl-L-homocysteine + H(+). It functions in the pathway cofactor biosynthesis; ubiquinone biosynthesis. Functionally, O-methyltransferase that catalyzes the 2 O-methylation steps in the ubiquinone biosynthetic pathway. The protein is Ubiquinone biosynthesis O-methyltransferase of Vibrio atlanticus (strain LGP32) (Vibrio splendidus (strain Mel32)).